A 149-amino-acid chain; its full sequence is D-aminoacyl-tRNA deacylase (149 aa).

The Gly-cisPro motif, important for rejection of L-amino acids signature appears at 138 to 139; the sequence is GP.

The protein belongs to the DTD family. As to quaternary structure, homodimer.

It localises to the cytoplasm. It catalyses the reaction glycyl-tRNA(Ala) + H2O = tRNA(Ala) + glycine + H(+). It carries out the reaction a D-aminoacyl-tRNA + H2O = a tRNA + a D-alpha-amino acid + H(+). An aminoacyl-tRNA editing enzyme that deacylates mischarged D-aminoacyl-tRNAs. Also deacylates mischarged glycyl-tRNA(Ala), protecting cells against glycine mischarging by AlaRS. Acts via tRNA-based rather than protein-based catalysis; rejects L-amino acids rather than detecting D-amino acids in the active site. By recycling D-aminoacyl-tRNA to D-amino acids and free tRNA molecules, this enzyme counteracts the toxicity associated with the formation of D-aminoacyl-tRNA entities in vivo and helps enforce protein L-homochirality. The sequence is that of D-aminoacyl-tRNA deacylase from Chlorobaculum parvum (strain DSM 263 / NCIMB 8327) (Chlorobium vibrioforme subsp. thiosulfatophilum).